Consider the following 596-residue polypeptide: MENIRNFCIIAHIDHGKSTLADRLLEFTSTVSNRQMQAQVLDDMDLERERGITIKSHAIQMNYIYEGQKYVLNLIDTPGHVDFSYEVSRSIAACEGALLIVDAAQGIEAQTISNLYLALENDLEIIPVLNKIDLPGAMPEEVKDQVVELLGCDRDSIIPASGKEGIGIFEILAAIIQRIPPPKGDPKAPLQALIFDSQFNSFRGIEVMFRIFNGTIKKGDKVKFINIGKEYYADEIGVLKLQQEPQLEMSAGNVGYIISGIKEAKDVKVGDTITHVSRPGEPIQGFADVKPMVFAGIYPVETSEFEDLRAAMEKLQLNDASLVWEPETSIALGFGFRCGFLGMLHMEIVQERLEREFDMTVITTVPSVQFKAYLTKGNEMVVVNAPSDMPEPTTLDYIEEPYIKAQIITKADFVGPVISLCMDKRGIITNQTYLTSDRVELTFELPLAEIVFDFFDKLKTISKGYASLDYELIGFRESNVIKLDIMLNGEKVDALSAIVHRDKAYDWGKRLCEKLKDLIPMQMFEIAVQAAIGQKIIARETVKAMRKNVLAKCYGGDISRKRKLLEKQKKGKKRMRQVGNVEIPQAAFMAILKLDQ.

The 182-residue stretch at 2-183 (ENIRNFCIIA…AIIQRIPPPK (182 aa)) folds into the tr-type G domain. GTP contacts are provided by residues 14–19 (DHGKST) and 130–133 (NKID).

Belongs to the TRAFAC class translation factor GTPase superfamily. Classic translation factor GTPase family. LepA subfamily.

It is found in the cell inner membrane. It carries out the reaction GTP + H2O = GDP + phosphate + H(+). In terms of biological role, required for accurate and efficient protein synthesis under certain stress conditions. May act as a fidelity factor of the translation reaction, by catalyzing a one-codon backward translocation of tRNAs on improperly translocated ribosomes. Back-translocation proceeds from a post-translocation (POST) complex to a pre-translocation (PRE) complex, thus giving elongation factor G a second chance to translocate the tRNAs correctly. Binds to ribosomes in a GTP-dependent manner. The chain is Elongation factor 4 from Cytophaga hutchinsonii (strain ATCC 33406 / DSM 1761 / CIP 103989 / NBRC 15051 / NCIMB 9469 / D465).